We begin with the raw amino-acid sequence, 482 residues long: O-methyltransferase tpcA (482 aa).

Residues Gly-293 to Gly-294, Asp-316, Ser-348 to Phe-349, and Arg-364 each bind S-adenosyl-L-methionine. Catalysis depends on His-368, which acts as the Proton acceptor.

It belongs to the class I-like SAM-binding methyltransferase superfamily. Cation-independent O-methyltransferase family. Specifically expressed in conidia.

It functions in the pathway secondary metabolite biosynthesis. O-methyltransferase; part of the gene cluster that mediates the biosynthesis of trypacidin, a mycotoxin with antiprotozoal activity and that plays a role in the infection process. The pathway begins with the synthesis of atrochrysone thioester by the polyketide synthase (PKS) tpcC. The atrochrysone carboxyl ACP thioesterase tpcB then breaks the thioester bond and releases the atrochrysone carboxylic acid from tpcC. The decarboxylase tpcK converts atrochrysone carboxylic acid to atrochrysone which is further reduced into emodin anthrone. The next step is performed by the emodin anthrone oxygenase tpcL that catalyzes the oxidation of emodinanthrone to emodin. Emodin O-methyltransferase encoded by tpcA catalyzes methylation of the 8-hydroxy group of emodin to form questin. Ring cleavage of questin by questin oxidase tpcI leads to desmethylsulochrin via several intermediates including questin epoxide. Another methylation step catalyzed by tpcM leads to the formation of sulochrin which is further converted to monomethylsulfochrin by tpcH. Finally, the tpcJ catalyzes the conversion of monomethylsulfochrin to trypacidin. Trypacidin is toxic for human pulmonary and bronchial epithelial cells by initiating the intracellular formation of nitric oxide (NO) and hydrogen peroxide (H(2)O(2)), thus triggering host necrotic cell death. The trypacidin pathway is also able to produce endocrocin via a distinct route from the endocrocin Enc pathway. The sequence is that of O-methyltransferase tpcA from Aspergillus fumigatus (strain ATCC MYA-4609 / CBS 101355 / FGSC A1100 / Af293) (Neosartorya fumigata).